We begin with the raw amino-acid sequence, 203 residues long: Outer-membrane lipoprotein carrier protein (203 aa).

Positions 1–21 (MKKLAITCALLSGMVVSQVWA) are cleaved as a signal peptide.

It belongs to the LolA family. Monomer.

Its subcellular location is the periplasm. Functionally, participates in the translocation of lipoproteins from the inner membrane to the outer membrane. Only forms a complex with a lipoprotein if the residue after the N-terminal Cys is not an aspartate (The Asp acts as a targeting signal to indicate that the lipoprotein should stay in the inner membrane). The protein is Outer-membrane lipoprotein carrier protein of Klebsiella pneumoniae subsp. pneumoniae (strain ATCC 700721 / MGH 78578).